The following is a 440-amino-acid chain: Trigger factor (440 aa).

Residues 176-261 (GDKVVIDYQN…VKSIYVVKDV (86 aa)) form the PPIase FKBP-type domain.

The protein belongs to the FKBP-type PPIase family. Tig subfamily.

The protein localises to the cytoplasm. It catalyses the reaction [protein]-peptidylproline (omega=180) = [protein]-peptidylproline (omega=0). Involved in protein export. Acts as a chaperone by maintaining the newly synthesized protein in an open conformation. Functions as a peptidyl-prolyl cis-trans isomerase. The chain is Trigger factor from Ehrlichia canis (strain Jake).